We begin with the raw amino-acid sequence, 132 residues long: uncharacterized protein (132 aa).

The tract at residues 17-75 is disordered; sequence RSAVPRWPHLSSQSGVEPPDRWTGTPGWPSRDQEAPGSMMPPAAAQPSAHGALVPPATA. The span at 51–65 shows a compositional bias: low complexity; the sequence is APGSMMPPAAAQPSA.

In terms of tissue distribution, expressed exclusively in heart.

Its subcellular location is the cytoplasm. This is an uncharacterized protein from Homo sapiens (Human).